We begin with the raw amino-acid sequence, 388 residues long: G2/mitotic-specific cyclin-B (388 aa).

It belongs to the cyclin family. Cyclin AB subfamily. Interacts with the CDK1 protein kinase to form a serine/threonine kinase holoenzyme complex also known as maturation promoting factor (MPF). The cyclin subunit imparts substrate specificity to the complex.

Essential for the control of the cell cycle at the G2/M (mitosis) transition. The polypeptide is G2/mitotic-specific cyclin-B (Marthasterias glacialis (Spiny starfish)).